We begin with the raw amino-acid sequence, 890 residues long: Translation initiation factor IF-2 (890 aa).

2 disordered regions span residues 31–164 (KLAQ…PAEP) and 189–266 (FKAP…ESLK). The span at 42–54 (SSSEKPSAKEKSV) shows a compositional bias: basic and acidic residues. Over residues 55 to 72 (KVALAATSTPTASAEQAS) the composition is skewed to low complexity. Positions 114-128 (PEPELEVVDEVCDES) are enriched in acidic residues. Basic and acidic residues-rich tracts occupy residues 149–163 (PQEKELEPKPVKPAE) and 242–266 (PKRDAGKKNLTDFRDRSKKSDESLK). The 170-residue stretch at 395–564 (IRSPIVAFMG…ALQAEVLELK (170 aa)) folds into the tr-type G domain. A G1 region spans residues 404-411 (GHVDHGKT). 404-411 (GHVDHGKT) contacts GTP. Residues 429-433 (AITQH) form a G2 region. The tract at residues 450–453 (DTPG) is G3. Residues 450 to 454 (DTPGH) and 504 to 507 (NKCD) contribute to the GTP site. Residues 504–507 (NKCD) are G4. The tract at residues 540–542 (SAK) is G5.

This sequence belongs to the TRAFAC class translation factor GTPase superfamily. Classic translation factor GTPase family. IF-2 subfamily.

It localises to the cytoplasm. In terms of biological role, one of the essential components for the initiation of protein synthesis. Protects formylmethionyl-tRNA from spontaneous hydrolysis and promotes its binding to the 30S ribosomal subunits. Also involved in the hydrolysis of GTP during the formation of the 70S ribosomal complex. The protein is Translation initiation factor IF-2 (infB) of Chlamydia pneumoniae (Chlamydophila pneumoniae).